Here is a 632-residue protein sequence, read N- to C-terminus: Phosphomethylpyrimidine synthase (632 aa).

Substrate is bound by residues N237, M266, Y295, H331, 351–353 (SRG), 392–395 (DGLR), and E431. H435 provides a ligand contact to Zn(2+). A substrate-binding site is contributed by Y458. Position 499 (H499) interacts with Zn(2+). C579, C582, and C587 together coordinate [4Fe-4S] cluster.

Belongs to the ThiC family. As to quaternary structure, homodimer. Requires [4Fe-4S] cluster as cofactor.

It carries out the reaction 5-amino-1-(5-phospho-beta-D-ribosyl)imidazole + S-adenosyl-L-methionine = 4-amino-2-methyl-5-(phosphooxymethyl)pyrimidine + CO + 5'-deoxyadenosine + formate + L-methionine + 3 H(+). It functions in the pathway cofactor biosynthesis; thiamine diphosphate biosynthesis. Its function is as follows. Catalyzes the synthesis of the hydroxymethylpyrimidine phosphate (HMP-P) moiety of thiamine from aminoimidazole ribotide (AIR) in a radical S-adenosyl-L-methionine (SAM)-dependent reaction. The chain is Phosphomethylpyrimidine synthase from Chromobacterium violaceum (strain ATCC 12472 / DSM 30191 / JCM 1249 / CCUG 213 / NBRC 12614 / NCIMB 9131 / NCTC 9757 / MK).